A 234-amino-acid polypeptide reads, in one-letter code: Arsenate respiratory reductase iron-sulfur subunit ArrB (234 aa).

3 consecutive 4Fe-4S ferredoxin-type domains span residues 3-32, 48-79, and 80-109; these read LGMV…NDGI, VKYT…KDKR, and GLTL…FNAA. 16 residues coordinate [4Fe-4S] cluster: Cys-12, Cys-15, Cys-18, Cys-22, Cys-57, Cys-60, Cys-65, Cys-69, Cys-89, Cys-92, Cys-95, Cys-99, Cys-164, Cys-167, Cys-179, and Cys-183.

In terms of assembly, heterodimer composed of one large subunit (ArrA) and one small subunit (ArrB). Requires [4Fe-4S] cluster as cofactor.

It is found in the periplasm. Phosphate is a competitive inhibitor. In terms of biological role, component of the arsenate respiratory reductase (Arr) complex, which catalyzes the reduction of arsenate (As(V)) to arsenite (As(III)). ArrB is probably the electron transfer subunit. The periplasmic localization of this complex may allow the cell to couple arsenate reduction to energy production before arsenate can be transported to the cell cytoplasm and enter the ars detoxification pathway, an energy-requiring process. The polypeptide is Arsenate respiratory reductase iron-sulfur subunit ArrB (Shewanella sp. (strain ANA-3)).